The chain runs to 67 residues: Prokaryotic ubiquitin-like protein Pup (67 aa).

The segment at 1-36 is disordered; that stretch reads MPQQFEQPQAQQAATQEDDALATTQAAAQTESADQA. The tract at residues 23–61 is ARC ATPase binding; that stretch reads TTQAAAQTESADQADVLDDILDDIESTLETNAEEYVNSF. Glutamate 67 participates in a covalent cross-link: Isoglutamyl lysine isopeptide (Glu-Lys) (interchain with K-? in acceptor proteins).

It belongs to the prokaryotic ubiquitin-like protein family. As to quaternary structure, strongly interacts with the proteasome-associated ATPase ARC through a hydrophobic interface; the interacting region of Pup lies in its C-terminal half. There is one Pup binding site per ARC hexamer ring.

The protein operates within protein degradation; proteasomal Pup-dependent pathway. In terms of biological role, protein modifier that is covalently attached to lysine residues of substrate proteins, thereby targeting them for proteasomal degradation. The tagging system is termed pupylation. This chain is Prokaryotic ubiquitin-like protein Pup, found in Bifidobacterium longum (strain DJO10A).